The sequence spans 142 residues: Small ribosomal subunit protein uS9 (142 aa).

It belongs to the universal ribosomal protein uS9 family. Component of the small ribosomal subunit (SSU). Mature N.crassa ribosomes consist of a small (40S) and a large (60S) subunit. The 40S small subunit contains 1 molecule of ribosomal RNA (18S rRNA) and at least 32 different proteins. The large 60S subunit contains 3 rRNA molecules (26S, 5.8S and 5S rRNA) and at least 42 different proteins.

The protein localises to the cytoplasm. In terms of biological role, component of the ribosome, a large ribonucleoprotein complex responsible for the synthesis of proteins in the cell. The small ribosomal subunit (SSU) binds messenger RNAs (mRNAs) and translates the encoded message by selecting cognate aminoacyl-transfer RNA (tRNA) molecules. The large subunit (LSU) contains the ribosomal catalytic site termed the peptidyl transferase center (PTC), which catalyzes the formation of peptide bonds, thereby polymerizing the amino acids delivered by tRNAs into a polypeptide chain. The nascent polypeptides leave the ribosome through a tunnel in the LSU and interact with protein factors that function in enzymatic processing, targeting, and the membrane insertion of nascent chains at the exit of the ribosomal tunnel. This chain is Small ribosomal subunit protein uS9 (rps-16), found in Neurospora crassa (strain ATCC 24698 / 74-OR23-1A / CBS 708.71 / DSM 1257 / FGSC 987).